A 467-amino-acid polypeptide reads, in one-letter code: Dimethylamine methyltransferase MtbB3 (467 aa).

O356 is a non-standard amino acid (pyrrolysine).

The protein belongs to the dimethylamine methyltransferase family.

The catalysed reaction is Co(I)-[dimethylamine-specific corrinoid protein] + dimethylamine + H(+) = methyl-Co(III)-[dimethylamine-specific corrinoid protein] + methylamine. It functions in the pathway one-carbon metabolism; methanogenesis from dimethylamine. In terms of biological role, catalyzes the transfer of a methyl group from dimethylamine to the corrinoid cofactor of MtbC. The sequence is that of Dimethylamine methyltransferase MtbB3 (mtbB3) from Methanosarcina acetivorans (strain ATCC 35395 / DSM 2834 / JCM 12185 / C2A).